A 463-amino-acid polypeptide reads, in one-letter code: MSNRMWGGRFASGPAEIMEEINASIGFDRRLASQDIRGSLAHVAMLGSQGILPAEDVAAIEAGLKSVEAEIARGEFVFRRELEDIHMAVESRLTEIVGPAAGRLHTARSRNDQVATDMRLWVRDTLDALDAQVADLQRALAETAVKHAGTVMPGFTHLQSAQPVTFGHHCLAYVEMLARDRGRFRDARARLNECPLGAAALAGTSFPIDRHATAAALGFDRPTANSLDSVADRDFALESLSAASICAVHLSRFAEELVVWTSAQFGFVRLSDGFTTGSSIMPQKRNPDAAELVRAKAGRIIGALTGLLIVMKGLPLAYSKDMQEDKEGTFDALQSLSLCLAAMAGMVRDLEPVAETLKRAAGSGYATATDLADWLVRELNMPFRQAHHVTGRVVAAASERGIGLEELSLQDMQAVEAGITDAVFAVLGVENSVASRTSYGGTAPDNVRRQAEGWLEKLGPVEK.

The protein belongs to the lyase 1 family. Argininosuccinate lyase subfamily.

The protein resides in the cytoplasm. The enzyme catalyses 2-(N(omega)-L-arginino)succinate = fumarate + L-arginine. The protein operates within amino-acid biosynthesis; L-arginine biosynthesis; L-arginine from L-ornithine and carbamoyl phosphate: step 3/3. The protein is Argininosuccinate lyase of Methylorubrum extorquens (strain CM4 / NCIMB 13688) (Methylobacterium extorquens).